Here is a 611-residue protein sequence, read N- to C-terminus: Leucine aminopeptidase (611 aa).

Residues 129-131 (QCQ) and 278-282 (GGMEN) contribute to the substrate site. Residue His-305 coordinates Zn(2+). Glu-306 (proton acceptor) is an active-site residue. Residues His-309 and Glu-328 each coordinate Zn(2+). Tyr-393 serves as the catalytic Proton donor. Substrate is bound at residue 562 to 564 (RMK).

The protein belongs to the peptidase M1 family. Requires Zn(2+) as cofactor.

The protein localises to the cytoplasm. The catalysed reaction is an epoxide + H2O = an ethanediol. Aminopeptidase that preferentially cleaves di- and tripeptides. Also has low epoxide hydrolase activity (in vitro). Can hydrolyze the epoxide leukotriene LTA(4) but it forms preferentially 5,6-dihydroxy-7,9,11,14-eicosatetraenoic acid rather than the cytokine leukotriene B(4) as the product compared to the homologous mammalian enzyme (in vitro). This is Leucine aminopeptidase (LKHA4) from Oryza sativa subsp. japonica (Rice).